We begin with the raw amino-acid sequence, 181 residues long: Ribulose bisphosphate carboxylase small subunit 2B, chloroplastic (181 aa).

The N-terminal 54 residues, 1–54 (MASSMFSSTAVVTSPAQATMVAPFTGLKSSASFPVTRKANNDITSITSNGGRVS), are a transit peptide targeting the chloroplast.

This sequence belongs to the RuBisCO small chain family. In terms of assembly, heterohexadecamer of 8 large and 8 small subunits.

Its subcellular location is the plastid. It localises to the chloroplast. RuBisCO catalyzes two reactions: the carboxylation of D-ribulose 1,5-bisphosphate, the primary event in carbon dioxide fixation, as well as the oxidative fragmentation of the pentose substrate. Both reactions occur simultaneously and in competition at the same active site. Although the small subunit is not catalytic it is essential for maximal activity. This is Ribulose bisphosphate carboxylase small subunit 2B, chloroplastic (RBCS-2B) from Arabidopsis thaliana (Mouse-ear cress).